The primary structure comprises 207 residues: Guanylate kinase (207 aa).

Positions 6–185 (GLLIVLSGPS…AKNRIQSIVE (180 aa)) constitute a Guanylate kinase-like domain. Position 13–20 (13–20 (GPSGVGKG)) interacts with ATP.

Belongs to the guanylate kinase family.

Its subcellular location is the cytoplasm. The enzyme catalyses GMP + ATP = GDP + ADP. Its function is as follows. Essential for recycling GMP and indirectly, cGMP. This is Guanylate kinase from Staphylococcus epidermidis (strain ATCC 12228 / FDA PCI 1200).